The primary structure comprises 459 residues: Cysteine--tRNA ligase (459 aa).

Zn(2+) is bound at residue cysteine 27. A 'HIGH' region motif is present at residues valine 29–histidine 39. The Zn(2+) site is built by cysteine 208, histidine 233, and glutamate 237. The 'KMSKS' region motif lies at lysine 265–serine 269. Lysine 268 lines the ATP pocket.

The protein belongs to the class-I aminoacyl-tRNA synthetase family. As to quaternary structure, monomer. Zn(2+) serves as cofactor.

The protein localises to the cytoplasm. The catalysed reaction is tRNA(Cys) + L-cysteine + ATP = L-cysteinyl-tRNA(Cys) + AMP + diphosphate. The polypeptide is Cysteine--tRNA ligase (Francisella tularensis subsp. mediasiatica (strain FSC147)).